The sequence spans 401 residues: Glutamyl-tRNA reductase (401 aa).

Substrate is bound by residues 49–52 (TCNR), Ser92, 97–99 (END), and Gln103. Cys50 acts as the Nucleophile in catalysis. NADP(+) is bound at residue 171 to 176 (GNGKMA).

It belongs to the glutamyl-tRNA reductase family. In terms of assembly, homodimer.

The catalysed reaction is (S)-4-amino-5-oxopentanoate + tRNA(Glu) + NADP(+) = L-glutamyl-tRNA(Glu) + NADPH + H(+). It participates in porphyrin-containing compound metabolism; protoporphyrin-IX biosynthesis; 5-aminolevulinate from L-glutamyl-tRNA(Glu): step 1/2. Functionally, catalyzes the NADPH-dependent reduction of glutamyl-tRNA(Glu) to glutamate 1-semialdehyde (GSA). In Picrophilus torridus (strain ATCC 700027 / DSM 9790 / JCM 10055 / NBRC 100828 / KAW 2/3), this protein is Glutamyl-tRNA reductase.